A 556-amino-acid polypeptide reads, in one-letter code: Formate--tetrahydrofolate ligase (556 aa).

Thr65–Ser72 provides a ligand contact to ATP.

The protein belongs to the formate--tetrahydrofolate ligase family.

It carries out the reaction (6S)-5,6,7,8-tetrahydrofolate + formate + ATP = (6R)-10-formyltetrahydrofolate + ADP + phosphate. It functions in the pathway one-carbon metabolism; tetrahydrofolate interconversion. In Clostridium perfringens (strain 13 / Type A), this protein is Formate--tetrahydrofolate ligase.